The primary structure comprises 183 residues: Inner membrane-spanning protein YciB (183 aa).

Transmembrane regions (helical) follow at residues 22 to 44 (VQAA…RILF), 53 to 73 (IVGL…DLAF), 76 to 96 (WKVT…QYVF), 121 to 141 (LGWA…SQLF), and 153 to 173 (GFTG…YPYI).

This sequence belongs to the YciB family.

It localises to the cell inner membrane. In terms of biological role, plays a role in cell envelope biogenesis, maintenance of cell envelope integrity and membrane homeostasis. The chain is Inner membrane-spanning protein YciB from Haemophilus ducreyi (strain 35000HP / ATCC 700724).